Consider the following 159-residue polypeptide: Putative RING-H2 finger protein ATL69 (159 aa).

A helical transmembrane segment spans residues 13–33 (LGYGIAIAVSILVLISFIMLA). An RING-type; atypical zinc finger spans residues 94 to 136 (CSICLCDYEAREPVRCIPECNHCFHTDCVDEWLRTSATCPLCR).

The protein belongs to the RING-type zinc finger family. ATL subfamily.

It localises to the membrane. The catalysed reaction is S-ubiquitinyl-[E2 ubiquitin-conjugating enzyme]-L-cysteine + [acceptor protein]-L-lysine = [E2 ubiquitin-conjugating enzyme]-L-cysteine + N(6)-ubiquitinyl-[acceptor protein]-L-lysine.. Its pathway is protein modification; protein ubiquitination. This is Putative RING-H2 finger protein ATL69 (ATL69) from Arabidopsis thaliana (Mouse-ear cress).